The chain runs to 391 residues: Carbamoyl phosphate synthase small chain (391 aa).

Residues 1–202 (MTQPAILVLE…AHASAGSGEE (202 aa)) are CPSase. 3 residues coordinate L-glutamine: S47, G254, and G256. A Glutamine amidotransferase type-1 domain is found at 206-391 (KVVAYDYGVK…RFVDLMAARA (186 aa)). Residue C282 is the Nucleophile of the active site. L-glutamine-binding residues include L283, Q286, N324, G326, and F327. Residues H366 and E368 contribute to the active site.

The protein belongs to the CarA family. As to quaternary structure, composed of two chains; the small (or glutamine) chain promotes the hydrolysis of glutamine to ammonia, which is used by the large (or ammonia) chain to synthesize carbamoyl phosphate. Tetramer of heterodimers (alpha,beta)4.

It carries out the reaction hydrogencarbonate + L-glutamine + 2 ATP + H2O = carbamoyl phosphate + L-glutamate + 2 ADP + phosphate + 2 H(+). The enzyme catalyses L-glutamine + H2O = L-glutamate + NH4(+). It functions in the pathway amino-acid biosynthesis; L-arginine biosynthesis; carbamoyl phosphate from bicarbonate: step 1/1. It participates in pyrimidine metabolism; UMP biosynthesis via de novo pathway; (S)-dihydroorotate from bicarbonate: step 1/3. Functionally, small subunit of the glutamine-dependent carbamoyl phosphate synthetase (CPSase). CPSase catalyzes the formation of carbamoyl phosphate from the ammonia moiety of glutamine, carbonate, and phosphate donated by ATP, constituting the first step of 2 biosynthetic pathways, one leading to arginine and/or urea and the other to pyrimidine nucleotides. The small subunit (glutamine amidotransferase) binds and cleaves glutamine to supply the large subunit with the substrate ammonia. The polypeptide is Carbamoyl phosphate synthase small chain (Xanthomonas axonopodis pv. citri (strain 306)).